An 89-amino-acid chain; its full sequence is Small ribosomal subunit protein uS15 (89 aa).

Belongs to the universal ribosomal protein uS15 family. In terms of assembly, part of the 30S ribosomal subunit. Forms a bridge to the 50S subunit in the 70S ribosome, contacting the 23S rRNA.

Its function is as follows. One of the primary rRNA binding proteins, it binds directly to 16S rRNA where it helps nucleate assembly of the platform of the 30S subunit by binding and bridging several RNA helices of the 16S rRNA. In terms of biological role, forms an intersubunit bridge (bridge B4) with the 23S rRNA of the 50S subunit in the ribosome. This Paramagnetospirillum magneticum (strain ATCC 700264 / AMB-1) (Magnetospirillum magneticum) protein is Small ribosomal subunit protein uS15.